The following is a 356-amino-acid chain: Histidinol-phosphate aminotransferase (356 aa).

N6-(pyridoxal phosphate)lysine is present on Lys214.

The protein belongs to the class-II pyridoxal-phosphate-dependent aminotransferase family. Histidinol-phosphate aminotransferase subfamily. Homodimer. Pyridoxal 5'-phosphate serves as cofactor.

It carries out the reaction L-histidinol phosphate + 2-oxoglutarate = 3-(imidazol-4-yl)-2-oxopropyl phosphate + L-glutamate. Its pathway is amino-acid biosynthesis; L-histidine biosynthesis; L-histidine from 5-phospho-alpha-D-ribose 1-diphosphate: step 7/9. The polypeptide is Histidinol-phosphate aminotransferase (Escherichia coli O7:K1 (strain IAI39 / ExPEC)).